A 149-amino-acid polypeptide reads, in one-letter code: Deoxyuridine 5'-triphosphate nucleotidohydrolase (149 aa).

Substrate contacts are provided by residues 68–70 (RSG), Asn81, 85–87 (LID), and Met95.

This sequence belongs to the dUTPase family. It depends on Mg(2+) as a cofactor.

It carries out the reaction dUTP + H2O = dUMP + diphosphate + H(+). It participates in pyrimidine metabolism; dUMP biosynthesis; dUMP from dCTP (dUTP route): step 2/2. In terms of biological role, this enzyme is involved in nucleotide metabolism: it produces dUMP, the immediate precursor of thymidine nucleotides and it decreases the intracellular concentration of dUTP so that uracil cannot be incorporated into DNA. In Polynucleobacter necessarius subsp. necessarius (strain STIR1), this protein is Deoxyuridine 5'-triphosphate nucleotidohydrolase.